The chain runs to 217 residues: Probable transaldolase (217 aa).

Lys83 acts as the Schiff-base intermediate with substrate in catalysis.

This sequence belongs to the transaldolase family. Type 3B subfamily.

The protein resides in the cytoplasm. It carries out the reaction D-sedoheptulose 7-phosphate + D-glyceraldehyde 3-phosphate = D-erythrose 4-phosphate + beta-D-fructose 6-phosphate. The protein operates within carbohydrate degradation; pentose phosphate pathway; D-glyceraldehyde 3-phosphate and beta-D-fructose 6-phosphate from D-ribose 5-phosphate and D-xylulose 5-phosphate (non-oxidative stage): step 2/3. Its function is as follows. Transaldolase is important for the balance of metabolites in the pentose-phosphate pathway. This is Probable transaldolase from Clostridium botulinum (strain Hall / ATCC 3502 / NCTC 13319 / Type A).